Consider the following 579-residue polypeptide: Keratinocyte proline-rich protein (579 aa).

Phosphoserine is present on S394. Residues 526–579 form a disordered region; sequence EAPYCGPSSYNQGQESGAGCGPGDVFPERRGQDGHGDQGNAFAGVKGEAKSAYF. Basic and acidic residues predominate over residues 551 to 561; sequence FPERRGQDGHG.

Expressed in the upper layer of epidermis and psoriasis (at protein level). Expressed in the upper layer of epidermis and psoriasis.

It localises to the cytoplasm. The chain is Keratinocyte proline-rich protein (KPRP) from Homo sapiens (Human).